Here is a 719-residue protein sequence, read N- to C-terminus: Translation factor guf1, mitochondrial (719 aa).

The transit peptide at 1–75 (MRGALCRPDV…TRCFSALRSL (75 aa)) directs the protein to the mitochondrion. The tr-type G domain occupies 119 to 301 (ERYRNFCIVA…AVISNVPAPV (183 aa)). Residues 128–135 (AHIDHGKS), 194–198 (DTPGH), and 248–251 (NKID) each bind GTP.

This sequence belongs to the TRAFAC class translation factor GTPase superfamily. Classic translation factor GTPase family. LepA subfamily.

It localises to the mitochondrion inner membrane. The enzyme catalyses GTP + H2O = GDP + phosphate + H(+). Its function is as follows. Promotes mitochondrial protein synthesis. May act as a fidelity factor of the translation reaction, by catalyzing a one-codon backward translocation of tRNAs on improperly translocated ribosomes. Binds to mitochondrial ribosomes in a GTP-dependent manner. The protein is Translation factor guf1, mitochondrial (guf1) of Neurospora crassa (strain ATCC 24698 / 74-OR23-1A / CBS 708.71 / DSM 1257 / FGSC 987).